The following is a 330-amino-acid chain: Protoheme IX farnesyltransferase (330 aa).

9 helical membrane-spanning segments follow: residues 30 to 50, 58 to 78, 106 to 126, 127 to 147, 155 to 175, 182 to 202, 228 to 248, 249 to 269, and 281 to 301; these read LVKP…MWMA, FFIT…INMV, LIFS…FTNL, LAAG…THWL, IVIG…ATTG, WVMF…LAIL, ILLY…PLGM, LGSF…WKAV, and AASL…AMGL.

This sequence belongs to the UbiA prenyltransferase family. Protoheme IX farnesyltransferase subfamily.

The protein resides in the cell inner membrane. The catalysed reaction is heme b + (2E,6E)-farnesyl diphosphate + H2O = Fe(II)-heme o + diphosphate. It participates in porphyrin-containing compound metabolism; heme O biosynthesis; heme O from protoheme: step 1/1. In terms of biological role, converts heme B (protoheme IX) to heme O by substitution of the vinyl group on carbon 2 of heme B porphyrin ring with a hydroxyethyl farnesyl side group. The protein is Protoheme IX farnesyltransferase of Synechococcus sp. (strain JA-2-3B'a(2-13)) (Cyanobacteria bacterium Yellowstone B-Prime).